The chain runs to 90 residues: Large ribosomal subunit protein bL27 (90 aa).

Residues 1–22 form a disordered region; sequence MAHKKAGGSTRNGRDSNPKMLG.

Belongs to the bacterial ribosomal protein bL27 family.

The chain is Large ribosomal subunit protein bL27 from Coxiella burnetii (strain CbuK_Q154) (Coxiella burnetii (strain Q154)).